The sequence spans 129 residues: Small ribosomal subunit protein bS18c (129 aa).

The disordered stretch occupies residues Met-1 to Lys-20.

Belongs to the bacterial ribosomal protein bS18 family. In terms of assembly, part of the 30S ribosomal subunit.

It is found in the plastid. The protein localises to the chloroplast. This is Small ribosomal subunit protein bS18c from Stigeoclonium helveticum (Green alga).